We begin with the raw amino-acid sequence, 56 residues long: Large ribosomal subunit protein bL32 (56 aa).

A compositionally biased stretch (basic residues) spans 1–16 (MAVQKSKKSRAARGMR). Residues 1–22 (MAVQKSKKSRAARGMRRSHDAL) form a disordered region.

It belongs to the bacterial ribosomal protein bL32 family.

This chain is Large ribosomal subunit protein bL32, found in Photobacterium profundum (strain SS9).